The following is a 130-amino-acid chain: Small ribosomal subunit protein uS11 (130 aa).

It belongs to the universal ribosomal protein uS11 family. As to quaternary structure, part of the 30S ribosomal subunit. Interacts with proteins S7 and S18. Binds to IF-3.

Located on the platform of the 30S subunit, it bridges several disparate RNA helices of the 16S rRNA. Forms part of the Shine-Dalgarno cleft in the 70S ribosome. This Prochlorococcus marinus (strain MIT 9313) protein is Small ribosomal subunit protein uS11.